Consider the following 691-residue polypeptide: Protein phosphatase 1 regulatory subunit 37 (691 aa).

The segment at 1–43 is disordered; it reads MEIAPQEAPPVPGADGDIEEAPAEAGSPSPASPPADGRLKAAA. A phosphoserine mark is found at S50 and S56. 5 LRR repeats span residues 220–240, 248–269, 277–297, 306–326, and 334–354; these read SLAVLHLENASLSGRPLMLLA, NLRELYLADNKLNGLQDSAQLG, SLQILDLRNNHVLDSGLAYIC, GLVTLVLWNNQLTHTGMAFLG, and SLETLNLGHNPIGNEGVRHLK. The tract at residues 460–662 is disordered; the sequence is EREEKEQPPQ…PEVKGGSCGL (203 aa). Over residues 468–481 the composition is skewed to polar residues; the sequence is PQLSASMPETTATE. Residues 505–523 are compositionally biased toward acidic residues; that stretch reads SDSDSDSDGEEEEEEEGER. S561 is modified (phosphoserine). Composition is skewed to pro residues over residues 584–605 and 620–634; these read PASPTPPSPPPPPSPPASPSLP and PQPPPEPPRSGPPLP.

This sequence belongs to the PPP1R37 family. Interacts with PPP1CA.

Its function is as follows. Inhibits phosphatase activity of protein phosphatase 1 (PP1) complexes. This is Protein phosphatase 1 regulatory subunit 37 (PPP1R37) from Homo sapiens (Human).